The following is a 310-amino-acid chain: Ornithine carbamoyltransferase (310 aa).

Carbamoyl phosphate-binding positions include S58–T61, Q85, R109, and H136–Q139. L-ornithine-binding positions include N167, D227, and S231–M232. Residues C266 to L267 and R294 each bind carbamoyl phosphate.

This sequence belongs to the aspartate/ornithine carbamoyltransferase superfamily. OTCase family.

The protein resides in the cytoplasm. It catalyses the reaction carbamoyl phosphate + L-ornithine = L-citrulline + phosphate + H(+). Its pathway is amino-acid biosynthesis; L-arginine biosynthesis; L-arginine from L-ornithine and carbamoyl phosphate: step 1/3. Functionally, reversibly catalyzes the transfer of the carbamoyl group from carbamoyl phosphate (CP) to the N(epsilon) atom of ornithine (ORN) to produce L-citrulline. The chain is Ornithine carbamoyltransferase from Rhodopseudomonas palustris (strain ATCC BAA-98 / CGA009).